The chain runs to 946 residues: Sorting nexin-14 (946 aa).

The next 2 membrane-spanning stretches (helical) occupy residues isoleucine 24–leucine 44 and isoleucine 49–leucine 69. The PXA domain occupies serine 130–proline 304. Residues glutamate 336–leucine 468 enclose the RGS domain. Serine 548 is modified (phosphoserine). The region spanning proline 570 to threonine 690 is the PX domain.

Belongs to the sorting nexin family. As to expression, widely expressed both in fetal and adult tissues.

Its subcellular location is the lysosome membrane. It localises to the late endosome membrane. It is found in the cell projection. The protein resides in the dendrite. Plays a role in maintaining normal neuronal excitability and synaptic transmission. May be involved in several stages of intracellular trafficking. Required for autophagosome clearance, possibly by mediating the fusion of lysosomes with autophagosomes. Binds phosphatidylinositol 3,5-bisphosphate (PtdIns(3,5)P2), a key component of late endosomes/lysosomes. Does not bind phosphatidylinositol 3-phosphate (PtdIns(3P)). This chain is Sorting nexin-14 (SNX14), found in Homo sapiens (Human).